A 343-amino-acid chain; its full sequence is N-acetyl-gamma-glutamyl-phosphate reductase (343 aa).

Cys-146 is a catalytic residue.

Belongs to the NAGSA dehydrogenase family. Type 1 subfamily.

It localises to the cytoplasm. The enzyme catalyses N-acetyl-L-glutamate 5-semialdehyde + phosphate + NADP(+) = N-acetyl-L-glutamyl 5-phosphate + NADPH + H(+). Its pathway is amino-acid biosynthesis; L-arginine biosynthesis; N(2)-acetyl-L-ornithine from L-glutamate: step 3/4. Functionally, catalyzes the NADPH-dependent reduction of N-acetyl-5-glutamyl phosphate to yield N-acetyl-L-glutamate 5-semialdehyde. This is N-acetyl-gamma-glutamyl-phosphate reductase from Acidothermus cellulolyticus (strain ATCC 43068 / DSM 8971 / 11B).